Here is a 267-residue protein sequence, read N- to C-terminus: MFIVSDGTGITAETFSHSILAQFEMRFRKVRMPFVDTPEKAHIAVGKINEAFHNEGVPPIVFTTLVNQEANKALRRAKAMILDMFQTFIEPLEKELGLKSTHAIGRFHQNADTEAYKNRIEAINFSLAHDDGQSHKNLEEADVILVGVSRSGKTPTSLYLAMQYGLKAANYPLIPDDFERGRLPSALYAFKPKIFGLSIDPQRLTEIRNERRPGSKYAALENCRYEVNEAEAMMRREGIKWLSSTHKSIEEIATTILQEIKVDRDNY.

Residue 147-154 (GVSRSGKT) participates in ADP binding.

This sequence belongs to the pyruvate, phosphate/water dikinase regulatory protein family. PSRP subfamily.

It catalyses the reaction [pyruvate, water dikinase] + ADP = [pyruvate, water dikinase]-phosphate + AMP + H(+). The catalysed reaction is [pyruvate, water dikinase]-phosphate + phosphate + H(+) = [pyruvate, water dikinase] + diphosphate. In terms of biological role, bifunctional serine/threonine kinase and phosphorylase involved in the regulation of the phosphoenolpyruvate synthase (PEPS) by catalyzing its phosphorylation/dephosphorylation. The chain is Putative phosphoenolpyruvate synthase regulatory protein from Cupriavidus necator (strain ATCC 17699 / DSM 428 / KCTC 22496 / NCIMB 10442 / H16 / Stanier 337) (Ralstonia eutropha).